A 283-amino-acid chain; its full sequence is Elongation factor Ts (283 aa).

The involved in Mg(2+) ion dislocation from EF-Tu stretch occupies residues 84–87; it reads TDFV.

It belongs to the EF-Ts family.

The protein localises to the cytoplasm. In terms of biological role, associates with the EF-Tu.GDP complex and induces the exchange of GDP to GTP. It remains bound to the aminoacyl-tRNA.EF-Tu.GTP complex up to the GTP hydrolysis stage on the ribosome. The chain is Elongation factor Ts from Bifidobacterium longum subsp. infantis (strain ATCC 15697 / DSM 20088 / JCM 1222 / NCTC 11817 / S12).